The chain runs to 184 residues: NADH-quinone oxidoreductase subunit B 1 (184 aa).

The [4Fe-4S] cluster site is built by Cys-37, Cys-38, Cys-103, and Cys-132.

It belongs to the complex I 20 kDa subunit family. NDH-1 is composed of 14 different subunits. Subunits NuoB, C, D, E, F, and G constitute the peripheral sector of the complex. [4Fe-4S] cluster is required as a cofactor.

It is found in the cell membrane. It catalyses the reaction a quinone + NADH + 5 H(+)(in) = a quinol + NAD(+) + 4 H(+)(out). Functionally, NDH-1 shuttles electrons from NADH, via FMN and iron-sulfur (Fe-S) centers, to quinones in the respiratory chain. The immediate electron acceptor for the enzyme in this species is believed to be a menaquinone. Couples the redox reaction to proton translocation (for every two electrons transferred, four hydrogen ions are translocated across the cytoplasmic membrane), and thus conserves the redox energy in a proton gradient. The polypeptide is NADH-quinone oxidoreductase subunit B 1 (Streptomyces coelicolor (strain ATCC BAA-471 / A3(2) / M145)).